Here is a 359-residue protein sequence, read N- to C-terminus: Membrane-bound lytic murein transglycosylase C (359 aa).

An N-terminal signal peptide occupies residues 1–16 (MKKYLALALIAPLLIS). The N-palmitoyl cysteine moiety is linked to residue C17. The S-diacylglycerol cysteine moiety is linked to residue C17.

It belongs to the transglycosylase Slt family.

It is found in the cell outer membrane. It carries out the reaction Exolytic cleavage of the (1-&gt;4)-beta-glycosidic linkage between N-acetylmuramic acid (MurNAc) and N-acetylglucosamine (GlcNAc) residues in peptidoglycan, from either the reducing or the non-reducing ends of the peptidoglycan chains, with concomitant formation of a 1,6-anhydrobond in the MurNAc residue.. Its function is as follows. Murein-degrading enzyme. May play a role in recycling of muropeptides during cell elongation and/or cell division. The polypeptide is Membrane-bound lytic murein transglycosylase C (Escherichia coli O8 (strain IAI1)).